A 47-amino-acid polypeptide reads, in one-letter code: Photosystem II reaction center protein K (47 aa).

Positions 1-10 (MAPLTLDLLA) are excised as a propeptide. The helical transmembrane segment at 26–46 (LPLIPLLFFLLVFVWQAAVGF) threads the bilayer.

Belongs to the PsbK family. PSII is composed of 1 copy each of membrane proteins PsbA, PsbB, PsbC, PsbD, PsbE, PsbF, PsbH, PsbI, PsbJ, PsbK, PsbL, PsbM, PsbT, PsbX, PsbY, Psb30/Ycf12, peripheral proteins PsbO, CyanoQ (PsbQ), PsbU, PsbV and a large number of cofactors. It forms dimeric complexes.

The protein localises to the cellular thylakoid membrane. In terms of biological role, one of the components of the core complex of photosystem II (PSII). PSII is a light-driven water:plastoquinone oxidoreductase that uses light energy to abstract electrons from H(2)O, generating O(2) and a proton gradient subsequently used for ATP formation. It consists of a core antenna complex that captures photons, and an electron transfer chain that converts photonic excitation into a charge separation. The polypeptide is Photosystem II reaction center protein K (Prochlorococcus marinus (strain SARG / CCMP1375 / SS120)).